The chain runs to 443 residues: Thymidine phosphorylase (443 aa).

This sequence belongs to the thymidine/pyrimidine-nucleoside phosphorylase family. As to quaternary structure, homodimer.

The enzyme catalyses thymidine + phosphate = 2-deoxy-alpha-D-ribose 1-phosphate + thymine. Its pathway is pyrimidine metabolism; dTMP biosynthesis via salvage pathway; dTMP from thymine: step 1/2. Its function is as follows. The enzymes which catalyze the reversible phosphorolysis of pyrimidine nucleosides are involved in the degradation of these compounds and in their utilization as carbon and energy sources, or in the rescue of pyrimidine bases for nucleotide synthesis. The polypeptide is Thymidine phosphorylase (Aliivibrio salmonicida (strain LFI1238) (Vibrio salmonicida (strain LFI1238))).